Consider the following 319-residue polypeptide: Quinolinate synthase (319 aa).

Iminosuccinate is bound by residues His35 and Ser52. Cys97 contacts [4Fe-4S] cluster. Residues 123 to 125 and Ser140 each bind iminosuccinate; that span reads YIN. Cys183 lines the [4Fe-4S] cluster pocket. Iminosuccinate contacts are provided by residues 209–211 and Thr226; that span reads HPE. Residue Cys276 participates in [4Fe-4S] cluster binding.

It belongs to the quinolinate synthase family. Type 2 subfamily. [4Fe-4S] cluster serves as cofactor.

The protein resides in the cytoplasm. It carries out the reaction iminosuccinate + dihydroxyacetone phosphate = quinolinate + phosphate + 2 H2O + H(+). The protein operates within cofactor biosynthesis; NAD(+) biosynthesis; quinolinate from iminoaspartate: step 1/1. Functionally, catalyzes the condensation of iminoaspartate with dihydroxyacetone phosphate to form quinolinate. In Microcystis aeruginosa (strain NIES-843 / IAM M-2473), this protein is Quinolinate synthase.